The following is a 491-amino-acid chain: Synaptotagmin-9 (491 aa).

Topologically, residues 1–52 (MPGARDALCHQALQLLAELCARGALEHDSCQDFIYHLRDRARPRLRDPDISV) are vesicular. The cysteine motif stretch occupies residues 9–31 (CHQALQLLAELCARGALEHDSCQ). The chain crosses the membrane as a helical span at residues 53 to 73 (SLLTLVVTACGLALFGVSLFV). At 74–491 (SWKLCWVPWR…AHWHSLVEKR (418 aa)) the chain is on the cytoplasmic side. Phosphoserine is present on Ser177. C2 domains lie at 220–341 (ACGK…ILWK) and 352–485 (DLGE…AHWH). 11 residues coordinate Ca(2+): Asp251, Asp257, Asp309, Phe310, Asp311, Ser314, Asp317, Asp383, Asp389, Asp443, and Asp445.

It belongs to the synaptotagmin family. In terms of assembly, homodimer; disulfide-linked via the cysteine motif. Can also form heterodimers with SYT3, SYT6, SYT7 and SYT10. The cofactor is Ca(2+).

It localises to the cytoplasmic vesicle. The protein resides in the secretory vesicle. It is found in the synaptic vesicle membrane. Functionally, may be involved in Ca(2+)-dependent exocytosis of secretory vesicles through Ca(2+) and phospholipid binding to the C2 domain or may serve as Ca(2+) sensors in the process of vesicular trafficking and exocytosis. This is Synaptotagmin-9 (SYT9) from Homo sapiens (Human).